The following is a 431-amino-acid chain: Protoheme IX farnesyltransferase, mitochondrial (431 aa).

A mitochondrion-targeting transit peptide spans Met1 to Cys33. Helical transmembrane passes span Leu109–Phe129, Gly131–Phe153, Ile174–Leu194, Met200–Leu220, Ile226–Ala246, Met255–Leu275, Ile298–Tyr317, Thr322–Phe344, and Met356–Val376.

This sequence belongs to the ubiA prenyltransferase (TC 3.D.4.8) family.

Its subcellular location is the mitochondrion inner membrane. The catalysed reaction is heme b + (2E,6E)-farnesyl diphosphate + H2O = Fe(II)-heme o + diphosphate. In terms of biological role, converts protoheme IX and farnesyl diphosphate to heme O. This is Protoheme IX farnesyltransferase, mitochondrial (COX10) from Arabidopsis thaliana (Mouse-ear cress).